We begin with the raw amino-acid sequence, 915 residues long: Protein translocase subunit SecA (915 aa).

Residues glutamine 87, 105-109 (GEGKT), and aspartate 512 contribute to the ATP site. Residues 849–864 (AAQQQARQAPLPNAPA) show a composition bias toward low complexity. The interval 849-915 (AAQQQARQAP…CHGSRAKDHA (67 aa)) is disordered. A compositionally biased stretch (basic and acidic residues) spans 876–891 (PEEKVARVAAERHIGR). Residues cysteine 895, cysteine 897, cysteine 906, and histidine 907 each coordinate Zn(2+).

Belongs to the SecA family. Monomer and homodimer. Part of the essential Sec protein translocation apparatus which comprises SecA, SecYEG and auxiliary proteins SecDF-YajC and YidC. Zn(2+) serves as cofactor.

The protein resides in the cell inner membrane. The protein localises to the cytoplasm. It carries out the reaction ATP + H2O + cellular proteinSide 1 = ADP + phosphate + cellular proteinSide 2.. Its function is as follows. Part of the Sec protein translocase complex. Interacts with the SecYEG preprotein conducting channel. Has a central role in coupling the hydrolysis of ATP to the transfer of proteins into and across the cell membrane, serving both as a receptor for the preprotein-SecB complex and as an ATP-driven molecular motor driving the stepwise translocation of polypeptide chains across the membrane. The chain is Protein translocase subunit SecA from Actinobacillus succinogenes (strain ATCC 55618 / DSM 22257 / CCUG 43843 / 130Z).